A 468-amino-acid chain; its full sequence is MTLEHQFDYDAIIIGSGPGGEGAAMGLAKHGAKIAVIERHYNVGGGCTHWGTIPSKALRHAVSRIIEFNQNPLYSDNSRIIRSSFSDILRHADSVIGQQTRMRQGFYERNQCELFSGEASFIDAHTIAVHYPDNTHETLTAANIIIATGSRPYHPAEVDFNHPRIYDSDSILQLDHEPQHVIIYGAGVIGCEYASIFRGLSVKVDLINTRDRLLAFLDQEMSDALSYHFWNNGVVIRHNEEFDSIEGLSDGVIVNLKSGKKMKADCLLYANGRTGNTETLGLENIGLSTDSRGQLKVNSMYQTALAHIYAIGDVIGYPSLASAAYDQGRLAAQAIIKGDASAHLIEDIPTGIYTIPEISSVGKTEQELTAMKVPYEVGRAQFKHLARAQIVGMNVGSLKILFHRETKQILGIHCFGERAAEIIHIGQAIMEQKGEGNTIEYFVNTTFNYPTMAEAYRVAALNGLNRLF.

FAD is bound at residue 38–47; sequence ERHYNVGGGC.

The protein belongs to the class-I pyridine nucleotide-disulfide oxidoreductase family. FAD serves as cofactor.

It is found in the cytoplasm. It catalyses the reaction NAD(+) + NADPH = NADH + NADP(+). Functionally, conversion of NADPH, generated by peripheral catabolic pathways, to NADH, which can enter the respiratory chain for energy generation. This chain is Soluble pyridine nucleotide transhydrogenase, found in Pectobacterium atrosepticum (strain SCRI 1043 / ATCC BAA-672) (Erwinia carotovora subsp. atroseptica).